Consider the following 283-residue polypeptide: Fructose-1,6-bisphosphatase class 1 (283 aa).

Mg(2+)-binding residues include E67, D86, L88, and D89. Substrate is bound by residues 89–92 (DGSS), Y195, and K225. E231 is a binding site for Mg(2+).

The protein belongs to the FBPase class 1 family. As to quaternary structure, homotetramer. The cofactor is Mg(2+).

It localises to the cytoplasm. It carries out the reaction beta-D-fructose 1,6-bisphosphate + H2O = beta-D-fructose 6-phosphate + phosphate. The protein operates within carbohydrate biosynthesis; gluconeogenesis. In Natronomonas pharaonis (strain ATCC 35678 / DSM 2160 / CIP 103997 / JCM 8858 / NBRC 14720 / NCIMB 2260 / Gabara) (Halobacterium pharaonis), this protein is Fructose-1,6-bisphosphatase class 1.